Reading from the N-terminus, the 937-residue chain is Protein translocase subunit SecA (937 aa).

ATP is bound by residues Gln90, Gly108–Thr112, and Asp509.

This sequence belongs to the SecA family. As to quaternary structure, monomer and homodimer. Part of the essential Sec protein translocation apparatus which comprises SecA, SecYEG and auxiliary proteins SecDF. Other proteins may also be involved.

The protein localises to the cell inner membrane. Its subcellular location is the cellular thylakoid membrane. The protein resides in the cytoplasm. The enzyme catalyses ATP + H2O + cellular proteinSide 1 = ADP + phosphate + cellular proteinSide 2.. In terms of biological role, part of the Sec protein translocase complex. Interacts with the SecYEG preprotein conducting channel. Has a central role in coupling the hydrolysis of ATP to the transfer of proteins into and across the cell membrane, serving as an ATP-driven molecular motor driving the stepwise translocation of polypeptide chains across the membrane. Its function is as follows. Probably participates in protein translocation into and across both the cytoplasmic and thylakoid membranes in cyanobacterial cells. The chain is Protein translocase subunit SecA from Parasynechococcus marenigrum (strain WH8102).